Here is a 701-residue protein sequence, read N- to C-terminus: Elongation factor G 2 (701 aa).

Positions 8–291 (ERYRNIGISA…AVIDYLPSPA (284 aa)) constitute a tr-type G domain. GTP is bound by residues 17 to 24 (AHIDAGKT), 88 to 92 (DTPGH), and 142 to 145 (NKMD).

The protein belongs to the TRAFAC class translation factor GTPase superfamily. Classic translation factor GTPase family. EF-G/EF-2 subfamily.

Its subcellular location is the cytoplasm. In terms of biological role, catalyzes the GTP-dependent ribosomal translocation step during translation elongation. During this step, the ribosome changes from the pre-translocational (PRE) to the post-translocational (POST) state as the newly formed A-site-bound peptidyl-tRNA and P-site-bound deacylated tRNA move to the P and E sites, respectively. Catalyzes the coordinated movement of the two tRNA molecules, the mRNA and conformational changes in the ribosome. The chain is Elongation factor G 2 from Burkholderia lata (strain ATCC 17760 / DSM 23089 / LMG 22485 / NCIMB 9086 / R18194 / 383).